Reading from the N-terminus, the 685-residue chain is DNA ligase (685 aa).

Residues 47–51, 96–97, and Glu125 each bind NAD(+); these read DSEYD and SL. Residue Lys127 is the N6-AMP-lysine intermediate of the active site. Positions 148, 185, 304, and 328 each coordinate NAD(+). Zn(2+)-binding residues include Cys422, Cys425, Cys440, and Cys446. In terms of domain architecture, BRCT spans 605–685; the sequence is ADAQPLKGQT…ALLALFAANR (81 aa).

The protein belongs to the NAD-dependent DNA ligase family. LigA subfamily. The cofactor is Mg(2+). Mn(2+) is required as a cofactor.

The catalysed reaction is NAD(+) + (deoxyribonucleotide)n-3'-hydroxyl + 5'-phospho-(deoxyribonucleotide)m = (deoxyribonucleotide)n+m + AMP + beta-nicotinamide D-nucleotide.. Its function is as follows. DNA ligase that catalyzes the formation of phosphodiester linkages between 5'-phosphoryl and 3'-hydroxyl groups in double-stranded DNA using NAD as a coenzyme and as the energy source for the reaction. It is essential for DNA replication and repair of damaged DNA. The polypeptide is DNA ligase (Shewanella putrefaciens (strain CN-32 / ATCC BAA-453)).